The sequence spans 297 residues: ATP synthase F(1) complex subunit gamma, mitochondrial (297 aa).

Residues 1–25 (MFSRAGVAGLSAWTLQPQWIQVRNM) constitute a mitochondrion transit peptide. Lys39 is modified (N6-acetyllysine). Lys49 bears the N6-succinyllysine mark. Position 55 is an N6-acetyllysine (Lys55). Lys115 is modified (N6-acetyllysine; alternate). Lys115 bears the N6-succinyllysine; alternate mark. The residue at position 146 (Ser146) is a Phosphoserine. Lys154 bears the N6-acetyllysine; alternate mark. Residue Lys154 is modified to N6-succinyllysine; alternate. An N6-acetyllysine modification is found at Lys197. Lys270 carries the post-translational modification N6-succinyllysine.

It belongs to the ATPase gamma chain family. Component of the ATP synthase complex composed at least of ATP5F1A/subunit alpha, ATP5F1B/subunit beta, ATP5MC1/subunit c (homooctomer), MT-ATP6/subunit a, MT-ATP8/subunit 8, ATP5ME/subunit e, ATP5MF/subunit f, ATP5MG/subunit g, ATP5MK/subunit k, ATP5MJ/subunit j, ATP5F1C/subunit gamma, ATP5F1D/subunit delta, ATP5F1E/subunit epsilon, ATP5PF/subunit F6, ATP5PB/subunit b, ATP5PD/subunit d, ATP5PO/subunit OSCP. ATP synthase complex consists of a soluble F(1) head domain (subunits alpha(3) and beta(3)) - the catalytic core - and a membrane F(0) domain - the membrane proton channel (subunits c, a, 8, e, f, g, k and j). These two domains are linked by a central stalk (subunits gamma, delta, and epsilon) rotating inside the F1 region and a stationary peripheral stalk (subunits F6, b, d, and OSCP). Interacts with FLVCR2; this interaction occurs in the absence of heme and is disrupted upon heme binding.

It localises to the mitochondrion inner membrane. In terms of biological role, subunit gamma, of the mitochondrial membrane ATP synthase complex (F(1)F(0) ATP synthase or Complex V) that produces ATP from ADP in the presence of a proton gradient across the membrane which is generated by electron transport complexes of the respiratory chain. ATP synthase complex consist of a soluble F(1) head domain - the catalytic core - and a membrane F(1) domain - the membrane proton channel. These two domains are linked by a central stalk rotating inside the F(1) region and a stationary peripheral stalk. During catalysis, ATP synthesis in the catalytic domain of F(1) is coupled via a rotary mechanism of the central stalk subunits to proton translocation. In vivo, can only synthesize ATP although its ATP hydrolase activity can be activated artificially in vitro. With the central stalk subunit delta, is essential for the biogenesis of F(1) catalytic part of the ATP synthase complex namely in the formation of F1 assembly intermediate. This Pongo abelii (Sumatran orangutan) protein is ATP synthase F(1) complex subunit gamma, mitochondrial.